A 443-amino-acid chain; its full sequence is Na(+)-translocating NADH-quinone reductase subunit A (443 aa).

It belongs to the NqrA family. In terms of assembly, composed of six subunits; NqrA, NqrB, NqrC, NqrD, NqrE and NqrF.

It catalyses the reaction a ubiquinone + n Na(+)(in) + NADH + H(+) = a ubiquinol + n Na(+)(out) + NAD(+). Functionally, NQR complex catalyzes the reduction of ubiquinone-1 to ubiquinol by two successive reactions, coupled with the transport of Na(+) ions from the cytoplasm to the periplasm. NqrA to NqrE are probably involved in the second step, the conversion of ubisemiquinone to ubiquinol. This is Na(+)-translocating NADH-quinone reductase subunit A from Mannheimia succiniciproducens (strain KCTC 0769BP / MBEL55E).